The chain runs to 272 residues: tRNA uridine(34) hydroxylase (272 aa).

Positions 121-217 (SRSDVYTIDT…YFKSTGNINN (97 aa)) constitute a Rhodanese domain. Catalysis depends on C177, which acts as the Cysteine persulfide intermediate.

Belongs to the TrhO family.

The catalysed reaction is uridine(34) in tRNA + AH2 + O2 = 5-hydroxyuridine(34) in tRNA + A + H2O. Its function is as follows. Catalyzes oxygen-dependent 5-hydroxyuridine (ho5U) modification at position 34 in tRNAs. This chain is tRNA uridine(34) hydroxylase, found in Ehrlichia ruminantium (strain Welgevonden).